Here is a 498-residue protein sequence, read N- to C-terminus: ATP synthase subunit beta, chloroplastic (498 aa).

172-179 lines the ATP pocket; the sequence is GGAGVGKT.

Belongs to the ATPase alpha/beta chains family. As to quaternary structure, F-type ATPases have 2 components, CF(1) - the catalytic core - and CF(0) - the membrane proton channel. CF(1) has five subunits: alpha(3), beta(3), gamma(1), delta(1), epsilon(1). CF(0) has four main subunits: a(1), b(1), b'(1) and c(9-12).

It is found in the plastid. The protein resides in the chloroplast thylakoid membrane. The catalysed reaction is ATP + H2O + 4 H(+)(in) = ADP + phosphate + 5 H(+)(out). Produces ATP from ADP in the presence of a proton gradient across the membrane. The catalytic sites are hosted primarily by the beta subunits. This is ATP synthase subunit beta, chloroplastic from Aristolochia macrophylla (Dutchman's pipe vine).